A 44-amino-acid chain; its full sequence is Photosystem I reaction center subunit IX (44 aa).

Residues 7 to 27 (YLSVAPVVSTIWFGALAGLLI) form a helical membrane-spanning segment.

This sequence belongs to the PsaJ family.

Its subcellular location is the plastid. It is found in the chloroplast thylakoid membrane. In terms of biological role, may help in the organization of the PsaE and PsaF subunits. The chain is Photosystem I reaction center subunit IX from Cucumis sativus (Cucumber).